The chain runs to 165 residues: Probable cell wall protein PGA15 (165 aa).

The N-terminal stretch at 1–16 (MKFIIILFTLISIVTA) is a signal peptide. The GPI-anchor amidated serine moiety is linked to residue Ser143. The propeptide at 144 to 165 (GAANYLTSFSIGTFFVFVLGLI) is removed in mature form.

It belongs to the IHD1 family. In terms of processing, the GPI-anchor is attached to the protein in the endoplasmic reticulum and serves to target the protein to the cell surface. There, the glucosamine-inositol phospholipid moiety is cleaved off and the GPI-modified mannoprotein is covalently attached via its lipidless GPI glycan remnant to the 1,6-beta-glucan of the outer cell wall layer.

The protein localises to the secreted. It localises to the cell wall. It is found in the membrane. Probable GPI-anchored cell wall protein that may be involved in cell wall organization, hyphal growth, as well as in virulence. This Candida albicans (strain SC5314 / ATCC MYA-2876) (Yeast) protein is Probable cell wall protein PGA15 (PGA15).